The chain runs to 408 residues: MVKVNGNYLKLKAGYLFPEIGRRVKAFSAANPEAALIRLGIGDVTEPLPLACREAMKTAIDAMGTAEGFHGYGPEQGYAWLREAIAQQDFQSRGCEINADEIFVSDGSKCDSSNILDILGEGNRVAVTDPVYPVYVDSNVMAGRTGDAGAEGRYAGLTYLPISADNNFSAEIPSEPVDLIYLCFPNNPTGAVATRAQLKAWVDYARSHNALILFDAAYEAFIQDPEIPHSIFEIEGARECAIEFRSFSKNAGFTGTRCAFTVVPKGLKGTAANGELVELWGLWNRRQSTKFNGVSYIIQRGAEAVYSTAGQAEVKTLVSFYMENASIIRQELTSLGLQIYGGEHAPYVWIKTPNGMDSWGFFDHLLNKANVVGTPGSGFGAAGEGYFRLSAFNSRKNVNEAMARIKSL.

Substrate-binding residues include Y15 and G42. Pyridoxal 5'-phosphate-binding positions include Y72, 108–109 (SK), Y132, N187, Y218, and 246–248 (SFS). Substrate contacts are provided by K109, Y132, and N187. N6-(pyridoxal phosphate)lysine is present on K249. Residues R257 and N292 each coordinate pyridoxal 5'-phosphate. The substrate site is built by N292 and R388.

The protein belongs to the class-I pyridoxal-phosphate-dependent aminotransferase family. LL-diaminopimelate aminotransferase subfamily. In terms of assembly, homodimer. It depends on pyridoxal 5'-phosphate as a cofactor.

The enzyme catalyses (2S,6S)-2,6-diaminopimelate + 2-oxoglutarate = (S)-2,3,4,5-tetrahydrodipicolinate + L-glutamate + H2O + H(+). Its pathway is amino-acid biosynthesis; L-lysine biosynthesis via DAP pathway; LL-2,6-diaminopimelate from (S)-tetrahydrodipicolinate (aminotransferase route): step 1/1. Its function is as follows. Involved in the synthesis of meso-diaminopimelate (m-DAP or DL-DAP), required for both lysine and peptidoglycan biosynthesis. Catalyzes the direct conversion of tetrahydrodipicolinate to LL-diaminopimelate. The sequence is that of LL-diaminopimelate aminotransferase from Synechococcus sp. (strain CC9902).